Consider the following 660-residue polypeptide: CXXC-type zinc finger protein 1 (660 aa).

Methionine 1 is subject to N-acetylmethionine. Acidic residues predominate over residues 1–14; sequence MEGDGSDLEPPDAG. The segment at 1–20 is disordered; that stretch reads MEGDGSDLEPPDAGDDSKSE. Residues serine 6 and serine 19 each carry the phosphoserine modification. A PHD-type zinc finger spans residues 28 to 76; it reads YCICRKPDINCFMIGCDNCNEWFHGDCIRITEKMAKAIREWYCRECREK. Over residues 91–120 the composition is skewed to basic and acidic residues; the sequence is ERDGSERAGSEPRDEGGGRKRPASDPELQR. The interval 91-166 is disordered; that stretch reads ERDGSERAGS…QQQQQQQQQI (76 aa). Serine 124 carries the post-translational modification Phosphoserine. Residues 164 to 213 form a CXXC-type zinc finger; the sequence is QQIKRSARMCGECEACRRTEDCGHCDFCRDMKKFGGPNKIRQKCRLRQCQ. Cysteine 173, cysteine 176, cysteine 179, cysteine 185, cysteine 188, cysteine 191, cysteine 207, and cysteine 212 together coordinate Zn(2+). Disordered stretches follow at residues 223–287 and 328–375; these read FPSS…SDED and AVKV…DPAS. Serine 228 carries the phosphoserine modification. At threonine 231 the chain carries Phosphothreonine. Lysine 254 participates in a covalent cross-link: Glycyl lysine isopeptide (Lys-Gly) (interchain with G-Cter in SUMO2). The span at 328–338 shows a compositional bias: basic residues; it reads AVKVKHVKRRE. Over residues 339–349 the composition is skewed to basic and acidic residues; sequence KKSEKKKEERY. A compositionally biased stretch (basic residues) spans 350–362; sequence KRHRQKQKHKDKW. Residues 363–372 show a composition bias toward basic and acidic residues; that stretch reads KHPERADAKD. The stretch at 426-479 forms a coiled coil; it reads AEEHGKKLLERIRREQQSARTRLQEMERRFHELEAIILRAKQQAVREDEENNEN.

Component of the SET1 complex, at least composed of the catalytic subunit (SETD1A or SETD1B), WDR5, WDR82, RBBP5, ASH2L/ASH2, CXXC1/CFP1, HCFC1 and DPY30. Interacts with SETD1A. Interacts with ZNF335. Interacts with PRDM9; this interaction does not link PRDM9-activated recombination hotspot sites with DSB machinery and is not required for the hotspot recognition pathway. Interacts with histone H3K4me3. In terms of tissue distribution, expressed in seminiferous tubules and in both germ cells and Sertoli cells. Highly expressed in spermatogonia, weakly expressed in leptonema and zygonema, and then again high expression in pachynema and diplonema, decreasing to undetectable levels in spermatids.

Its subcellular location is the nucleus speckle. It is found in the nucleus. Transcriptional activator that exhibits a unique DNA binding specificity for CpG unmethylated motifs with a preference for CpGG. The polypeptide is CXXC-type zinc finger protein 1 (Cxxc1) (Mus musculus (Mouse)).